The sequence spans 131 residues: Meiotically up-regulated gene 115 protein (131 aa).

The protein localises to the mitochondrion. It localises to the nucleus. In terms of biological role, has a role in meiosis. The polypeptide is Meiotically up-regulated gene 115 protein (mug115) (Schizosaccharomyces pombe (strain 972 / ATCC 24843) (Fission yeast)).